The sequence spans 208 residues: Protein-L-isoaspartate O-methyltransferase (208 aa).

The active site involves Ser-59.

Belongs to the methyltransferase superfamily. L-isoaspartyl/D-aspartyl protein methyltransferase family.

It localises to the cytoplasm. The enzyme catalyses [protein]-L-isoaspartate + S-adenosyl-L-methionine = [protein]-L-isoaspartate alpha-methyl ester + S-adenosyl-L-homocysteine. Catalyzes the methyl esterification of L-isoaspartyl residues in peptides and proteins that result from spontaneous decomposition of normal L-aspartyl and L-asparaginyl residues. It plays a role in the repair and/or degradation of damaged proteins. This Erwinia tasmaniensis (strain DSM 17950 / CFBP 7177 / CIP 109463 / NCPPB 4357 / Et1/99) protein is Protein-L-isoaspartate O-methyltransferase.